The sequence spans 166 residues: Cyclic pyranopterin monophosphate synthase (166 aa).

Substrate-binding positions include 75-77 and 113-114; these read LCH and ME. Asp-128 is an active-site residue.

Belongs to the MoaC family. As to quaternary structure, homohexamer; trimer of dimers.

It catalyses the reaction (8S)-3',8-cyclo-7,8-dihydroguanosine 5'-triphosphate = cyclic pyranopterin phosphate + diphosphate. It participates in cofactor biosynthesis; molybdopterin biosynthesis. Its function is as follows. Catalyzes the conversion of (8S)-3',8-cyclo-7,8-dihydroguanosine 5'-triphosphate to cyclic pyranopterin monophosphate (cPMP). The protein is Cyclic pyranopterin monophosphate synthase of Thermomicrobium roseum (strain ATCC 27502 / DSM 5159 / P-2).